The following is a 368-amino-acid chain: Divinyl chlorophyll a/b light-harvesting protein PcbA (368 aa).

The next 6 helical transmembrane spans lie at 27-47 (FIAS…ANTL), 63-83 (GFVV…NGVI), 89-109 (MLVV…GAML), 203-223 (VMGG…WHIF), 243-263 (FVLS…AFWA), and 307-327 (LSNF…WHGL).

The protein belongs to the PsbB/PsbC family. IsiA/Pcb subfamily. In terms of assembly, the antenna complex consists of divinyl chlorophylls (a and b) and divinyl chlorophyll a/b binding proteins. Forms complexes with PSII, consisting of a PSII dimer and 4 or 8 PcbA subunits. These complexes are also found under conditions of iron-starvation. Requires divinyl chlorophyll a as cofactor. Divinyl chlorophyll b serves as cofactor.

The protein localises to the cellular thylakoid membrane. Functionally, the antenna complex functions as a light receptor, it captures and delivers excitation energy to photosystems II. The Prochlorales pcb genes are not related to higher plant LHCs. This chain is Divinyl chlorophyll a/b light-harvesting protein PcbA (pcbA), found in Prochlorococcus marinus (strain MIT 9313).